Consider the following 218-residue polypeptide: MGMWSIGVGAVGAAAVALLLANTDMFLSKPRKAALEYLEDIDLKTLEKEPRTFKAKELWEKNGAVIMAVRRPGCFLCRAEAADLMSLKPKLDELGVPLYAVVKEQVKREVEDFQPYFKGEIFLDEKKKFYGPERRKMMFMGLIRLGVWYNSFRAWNGGFSGNLEGEGFILGGVFVIGSGKQGILLEHREKEFGDRVNPLSVLEAVKKIKLQTPASGRS.

Residues M3 to V101 form a thioredoxin-like fold region. Residues C74 and C77 each act as redox-active in the active site.

It belongs to the peroxiredoxin-like PRXL2 family. PRXL2A subfamily. Expressed in kidney, liver, skin, and brain. Widely expressed with highest levels detected in adipose tissue.

The protein resides in the cytoplasm. It is found in the secreted. In terms of biological role, involved in redox regulation of the cell. Acts as an antioxidant. Inhibits TNFSF11-induced NFKB1 and JUN activation and osteoclast differentiation. May affect bone resorption and help to maintain bone mass. Acts as a negative regulator of macrophage-mediated inflammation by inhibiting macrophage production of inflammatory cytokines, probably through suppression of the MAPK signaling pathway. The polypeptide is Peroxiredoxin-like 2A (Prxl2a) (Mus musculus (Mouse)).